A 477-amino-acid polypeptide reads, in one-letter code: Pentatricopeptide repeat-containing protein At4g14170 (477 aa).

PPR repeat units lie at residues 65-96 (NVVL…MPYR), 97-131 (NIFS…SCVR), 133-167 (DDFT…GFSS), 168-198 (SLFV…MPVR), 199-233 (DSVL…GFAL), 234-264 (DSVV…CIRR), 269-299 (GLNL…MSRR), 300-334 (DVIS…GIEP), 335-369 (NAVT…NIVP), and 370-400 (ELKH…MPVK). The interval 405-477 (VMGAVLSGCK…ISKVPGCSSI (73 aa)) is type E motif; degenerate.

It belongs to the PPR family. PCMP-E subfamily.

The polypeptide is Pentatricopeptide repeat-containing protein At4g14170 (PCMP-E17) (Arabidopsis thaliana (Mouse-ear cress)).